A 536-amino-acid polypeptide reads, in one-letter code: Phosphoenolpyruvate carboxykinase (ATP) (536 aa).

Substrate is bound by residues arginine 62, tyrosine 203, and lysine 209. Residues lysine 209, histidine 228, and 244–252 (GLSGTGKTT) each bind ATP. Residues lysine 209 and histidine 228 each contribute to the Mn(2+) site. Aspartate 265 is a binding site for Mn(2+). ATP-binding positions include glutamate 293, arginine 329, 445-446 (RI), and threonine 451. Arginine 329 provides a ligand contact to substrate.

Belongs to the phosphoenolpyruvate carboxykinase (ATP) family. In terms of assembly, monomer. Mn(2+) serves as cofactor.

The protein resides in the cytoplasm. It catalyses the reaction oxaloacetate + ATP = phosphoenolpyruvate + ADP + CO2. Its pathway is carbohydrate biosynthesis; gluconeogenesis. In terms of biological role, involved in the gluconeogenesis. Catalyzes the conversion of oxaloacetate (OAA) to phosphoenolpyruvate (PEP) through direct phosphoryl transfer between the nucleoside triphosphate and OAA. The sequence is that of Phosphoenolpyruvate carboxykinase (ATP) from Actinobacillus pleuropneumoniae serotype 7 (strain AP76).